The chain runs to 601 residues: Terpenoid synthase 17 (601 aa).

Residues N354, D358, N497, T501, and E505 each contribute to the Mg(2+) site. The short motif at 354-358 (NDTCD) is the DDXXD motif; degenerate element.

Belongs to the terpene synthase family. Tpsa subfamily. Requires Mg(2+) as cofactor. Mn(2+) is required as a cofactor. Expressed exclusively in flowers.

Its subcellular location is the cytoplasm. The protein operates within secondary metabolite biosynthesis; terpenoid biosynthesis. This chain is Terpenoid synthase 17 (TPS17), found in Arabidopsis thaliana (Mouse-ear cress).